A 405-amino-acid polypeptide reads, in one-letter code: Deoxyguanosinetriphosphate triphosphohydrolase-like protein (405 aa).

The 145-residue stretch at 75–219 (RLTHTIEVAQ…AAIADDIAYN (145 aa)) folds into the HD domain.

Belongs to the dGTPase family. Type 2 subfamily.

This is Deoxyguanosinetriphosphate triphosphohydrolase-like protein from Sinorhizobium medicae (strain WSM419) (Ensifer medicae).